A 448-amino-acid chain; its full sequence is Phosphoglucosamine mutase (448 aa).

The active-site Phosphoserine intermediate is Ser100. Mg(2+) is bound by residues Ser100, Asp240, Asp242, and Asp244. The residue at position 100 (Ser100) is a Phosphoserine.

The protein belongs to the phosphohexose mutase family. Requires Mg(2+) as cofactor. Post-translationally, activated by phosphorylation.

It catalyses the reaction alpha-D-glucosamine 1-phosphate = D-glucosamine 6-phosphate. In terms of biological role, catalyzes the conversion of glucosamine-6-phosphate to glucosamine-1-phosphate. The protein is Phosphoglucosamine mutase of Alkaliphilus metalliredigens (strain QYMF).